Here is a 405-residue protein sequence, read N- to C-terminus: Serine--glyoxylate aminotransferase (405 aa).

The residue at position 196 (Lys-196) is an N6-(pyridoxal phosphate)lysine.

This sequence belongs to the class-V pyridoxal-phosphate-dependent aminotransferase family. It depends on pyridoxal 5'-phosphate as a cofactor.

It carries out the reaction glyoxylate + L-serine = 3-hydroxypyruvate + glycine. The protein operates within one-carbon metabolism; formaldehyde assimilation via serine pathway. This is Serine--glyoxylate aminotransferase (sgaA) from Hyphomicrobium methylovorum.